The following is a 497-amino-acid chain: WASH complex subunit homolog 1 (497 aa).

The disordered stretch occupies residues 306 to 497; the sequence is EASEPTEAEA…PPNFDDEEWD (192 aa). Positions 323–339 are enriched in pro residues; sequence LPPPPPPMKLDPSPQPA. A compositionally biased stretch (low complexity) spans 341–350; sequence TPVEITEIPP. The segment covering 351–372 has biased composition (pro residues); the sequence is IISPPAPPPPPPPPPPPPPPQT. The WH2 domain maps to 390 to 412; that stretch reads GRSDLMAAIRAAGGAGNAKLSRI.

This sequence belongs to the WASH1 family. In terms of assembly, component of the WASH core complex. Component of the DHIC (ddl-1-containing hsf-1 inhibitory) complex, which contains at least ddl-1, ddl-2, hsb-1 and hsf-1. Within the complex, interacts with ddl-1. Formation of the DHIC may be dependent upon the Insulin/IGF-1-like signaling (IIS) mediated pathway. In terms of tissue distribution, expressed in several neurons located throughout the body.

Acts as a component of the WASH core complex that functions as a nucleation-promoting factor (NPF) at the surface of endosomes, where it recruits and activates the Arp2/3 complex to induce actin polymerization, playing a key role in the fission of tubules that serve as transport intermediates during endosome sorting. Acts as a component of the DHIC (ddl-1-containing hsf-1 inhibitory complex) which modulates lifespan by sequestering the heat shock transcription factor hsf-1 to negatively regulate its binding to DNA and its transcriptional activity. The chain is WASH complex subunit homolog 1 from Caenorhabditis elegans.